The primary structure comprises 256 residues: Thiazole synthase (256 aa).

The active-site Schiff-base intermediate with DXP is lysine 95. Residues glycine 156, 182–183 (AG), and 204–205 (NT) each bind 1-deoxy-D-xylulose 5-phosphate.

This sequence belongs to the ThiG family. Homotetramer. Forms heterodimers with either ThiH or ThiS.

Its subcellular location is the cytoplasm. The enzyme catalyses [ThiS sulfur-carrier protein]-C-terminal-Gly-aminoethanethioate + 2-iminoacetate + 1-deoxy-D-xylulose 5-phosphate = [ThiS sulfur-carrier protein]-C-terminal Gly-Gly + 2-[(2R,5Z)-2-carboxy-4-methylthiazol-5(2H)-ylidene]ethyl phosphate + 2 H2O + H(+). Its pathway is cofactor biosynthesis; thiamine diphosphate biosynthesis. Functionally, catalyzes the rearrangement of 1-deoxy-D-xylulose 5-phosphate (DXP) to produce the thiazole phosphate moiety of thiamine. Sulfur is provided by the thiocarboxylate moiety of the carrier protein ThiS. In vitro, sulfur can be provided by H(2)S. This chain is Thiazole synthase, found in Shigella dysenteriae serotype 1 (strain Sd197).